The following is a 296-amino-acid chain: Small ribosomal subunit biogenesis GTPase RsgA (296 aa).

Residues 65-223 (INRIGRPAVA…LADTPGFSSI (159 aa)) form the CP-type G domain. Residues 114 to 117 (SKAD) and 166 to 174 (GQSGAGKST) contribute to the GTP site. Positions 247, 252, 254, and 260 each coordinate Zn(2+).

The protein belongs to the TRAFAC class YlqF/YawG GTPase family. RsgA subfamily. Monomer. Associates with 30S ribosomal subunit, binds 16S rRNA. Requires Zn(2+) as cofactor.

It localises to the cytoplasm. In terms of biological role, one of several proteins that assist in the late maturation steps of the functional core of the 30S ribosomal subunit. Helps release RbfA from mature subunits. May play a role in the assembly of ribosomal proteins into the subunit. Circularly permuted GTPase that catalyzes slow GTP hydrolysis, GTPase activity is stimulated by the 30S ribosomal subunit. In Lactobacillus acidophilus (strain ATCC 700396 / NCK56 / N2 / NCFM), this protein is Small ribosomal subunit biogenesis GTPase RsgA.